The chain runs to 58 residues: Small ribosomal subunit protein bS21 (58 aa).

The disordered stretch occupies residues 39–58 (DKPSVKKRAKSKAAAKYRSR). Over residues 43-58 (VKKRAKSKAAAKYRSR) the composition is skewed to basic residues.

It belongs to the bacterial ribosomal protein bS21 family.

This is Small ribosomal subunit protein bS21 from Chlamydia abortus (strain DSM 27085 / S26/3) (Chlamydophila abortus).